Consider the following 695-residue polypeptide: Elongation factor G 2 (695 aa).

One can recognise a tr-type G domain in the interval 5–280 (SKYRNIGIFA…AVVDYLPSPT (276 aa)). Residues 14–21 (AHVDAGKT), 78–82 (DTPGH), and 132–135 (NKLD) contribute to the GTP site.

This sequence belongs to the TRAFAC class translation factor GTPase superfamily. Classic translation factor GTPase family. EF-G/EF-2 subfamily.

The protein resides in the cytoplasm. In terms of biological role, catalyzes the GTP-dependent ribosomal translocation step during translation elongation. During this step, the ribosome changes from the pre-translocational (PRE) to the post-translocational (POST) state as the newly formed A-site-bound peptidyl-tRNA and P-site-bound deacylated tRNA move to the P and E sites, respectively. Catalyzes the coordinated movement of the two tRNA molecules, the mRNA and conformational changes in the ribosome. The chain is Elongation factor G 2 from Photobacterium profundum (strain SS9).